We begin with the raw amino-acid sequence, 320 residues long: AA9 family lytic polysaccharide monooxygenase-like protein CEL1 (320 aa).

The first 29 residues, 1–29, serve as a signal peptide directing secretion; the sequence is MRLPSRQQVLKMLATFSLALGLFAAKVQA. 2 disulfide bridges follow: Cys78-Cys199 and Cys121-Cys126. His109 is a binding site for Cu(2+). N-linked (GlcNAc...) asparagine glycosylation is present at Asn163. Residues His189 and Gln194 each contribute to the O2 site. Tyr196 is a Cu(2+) binding site. Residues 255 to 284 form a disordered region; it reads GSGGNGGSPTTTPHTTTPITTSPPPTSTPG. The segment covering 262–274 has biased composition (low complexity); the sequence is SPTTTPHTTTPIT. Residues 284-320 form the CBM1 domain; the sequence is GTIPQYGQCGGIGWTGGTGCVAPYQCKVINDYYSQCL.

It belongs to the polysaccharide monooxygenase AA9 family. The cofactor is Cu(2+).

Its subcellular location is the secreted. The catalysed reaction is [(1-&gt;4)-beta-D-glucosyl]n+m + reduced acceptor + O2 = 4-dehydro-beta-D-glucosyl-[(1-&gt;4)-beta-D-glucosyl]n-1 + [(1-&gt;4)-beta-D-glucosyl]m + acceptor + H2O.. Its function is as follows. Lytic polysaccharide monooxygenase (LPMO)-like protein that binds strongly to cellulose. Seems not to acts as an endoglucanase, a ceUobiohydrolase able to hydrolyze fluorogenic cellobiosides, a /3-glucosidase, a xylanase, nor a cellobiose:quinone oxidoreductase. In Agaricus bisporus (White button mushroom), this protein is AA9 family lytic polysaccharide monooxygenase-like protein CEL1.